A 175-amino-acid polypeptide reads, in one-letter code: Ribosome maturation factor RimM (175 aa).

One can recognise a PRC barrel domain in the interval 100-174 (EDEYYWNDVI…VKHKIITVIW (75 aa)).

It belongs to the RimM family. As to quaternary structure, binds ribosomal protein uS19.

It is found in the cytoplasm. In terms of biological role, an accessory protein needed during the final step in the assembly of 30S ribosomal subunit, possibly for assembly of the head region. Essential for efficient processing of 16S rRNA. May be needed both before and after RbfA during the maturation of 16S rRNA. It has affinity for free ribosomal 30S subunits but not for 70S ribosomes. In Buchnera aphidicola subsp. Schizaphis graminum (strain Sg), this protein is Ribosome maturation factor RimM.